A 608-amino-acid polypeptide reads, in one-letter code: Granule-bound starch synthase 1, chloroplastic/amyloplastic (608 aa).

A chloroplast-targeting transit peptide spans 1-78; the sequence is MATVIAAHFV…NGRPAAKIIC (78 aa). An ADP-alpha-D-glucose-binding site is contributed by Lys96. The tract at residues 587 to 608 is disordered; that stretch reads GSEPGTEGEEIAPLAKENVPTP.

It belongs to the glycosyltransferase 1 family. Bacterial/plant glycogen synthase subfamily. As to expression, synthesized in a number of different organs, but most abundantly in tubers.

The protein resides in the plastid. It is found in the chloroplast. The protein localises to the amyloplast. The catalysed reaction is an NDP-alpha-D-glucose + [(1-&gt;4)-alpha-D-glucosyl](n) = [(1-&gt;4)-alpha-D-glucosyl](n+1) + a ribonucleoside 5'-diphosphate + H(+). The protein operates within glycan biosynthesis; starch biosynthesis. Responsible for the synthesis of amylose in reserve starch. This chain is Granule-bound starch synthase 1, chloroplastic/amyloplastic (WAXY), found in Manihot esculenta (Cassava).